Consider the following 262-residue polypeptide: Small ribosomal subunit protein mS23 (262 aa).

The segment at 211-262 is disordered; that stretch reads SGQSDEAPEGEGSDMSAGEYDMAVEELAGQGSIPNTPQSTVVPEGTSAPAHA. A compositionally biased stretch (polar residues) spans 242-251; the sequence is SIPNTPQSTV.

This sequence belongs to the mitochondrion-specific ribosomal protein mS23 family. In terms of assembly, component of the mitochondrial small ribosomal subunit.

Its subcellular location is the mitochondrion. In Phaeosphaeria nodorum (strain SN15 / ATCC MYA-4574 / FGSC 10173) (Glume blotch fungus), this protein is Small ribosomal subunit protein mS23 (RSM25).